We begin with the raw amino-acid sequence, 202 residues long: Alpha-S1-casein (202 aa).

Disordered stretches follow at residues 1-25 (RPKL…VLKE) and 51-84 (LKEK…VVPI). Composition is skewed to basic and acidic residues over residues 16–25 (QDSREKVLKE) and 51–63 (LKEK…KEYL). S18 bears the Phosphoserine mark. Residues 70 to 80 (QESSSTSSSEE) show a composition bias toward low complexity. Phosphoserine occurs at positions 72, 73, 74, 76, 77, and 78.

This sequence belongs to the alpha-casein family. In terms of tissue distribution, mammary gland specific. Secreted in milk.

The protein localises to the secreted. Its function is as follows. Important role in the capacity of milk to transport calcium phosphate. The sequence is that of Alpha-S1-casein from Equus asinus (Donkey).